The primary structure comprises 233 residues: NAD-dependent protein deacylase (233 aa).

Residues 1–230 enclose the Deacetylase sirtuin-type domain; that stretch reads MKNIMILSGA…ALDIENFMKD (230 aa). 9 to 28 is a binding site for NAD(+); the sequence is GAGLSAPSGLKTFRDNDGLW. The substrate site is built by Y53 and R56. Residue 88–91 participates in NAD(+) binding; that stretch reads QNVD. H106 (proton acceptor) is an active-site residue. Zn(2+) contacts are provided by C114, C117, C133, and C136. Residues 172 to 174 and 200 to 202 each bind NAD(+); these read GTS and NLE.

Belongs to the sirtuin family. Class III subfamily. Requires Zn(2+) as cofactor.

The protein resides in the cytoplasm. The enzyme catalyses N(6)-acetyl-L-lysyl-[protein] + NAD(+) + H2O = 2''-O-acetyl-ADP-D-ribose + nicotinamide + L-lysyl-[protein]. It carries out the reaction N(6)-succinyl-L-lysyl-[protein] + NAD(+) + H2O = 2''-O-succinyl-ADP-D-ribose + nicotinamide + L-lysyl-[protein]. In terms of biological role, NAD-dependent lysine deacetylase and desuccinylase that specifically removes acetyl and succinyl groups on target proteins. Modulates the activities of several proteins which are inactive in their acylated form. The protein is NAD-dependent protein deacylase of Campylobacter jejuni subsp. jejuni serotype O:2 (strain ATCC 700819 / NCTC 11168).